Here is a 206-residue protein sequence, read N- to C-terminus: MPVPSRERVIELISELVHAQGYDVEDVVVTSAGKHSAVRIMVDSDAGIELDAAAEISRLVSELFDSLEEIGETPYTLEVTSPGIDRPLTLERHWRRARGRKARIDLAGETVVGRIGTLNDDSVAVVIGGRGGLTVREIALGDVQKAVVQVEFSKPSEAELELAGGIPEGRAVPSDAVDLTDDSGVDSVEDDEAELEDVENEEGFDK.

A disordered region spans residues 164 to 206 (GGIPEGRAVPSDAVDLTDDSGVDSVEDDEAELEDVENEEGFDK). Residues 178–206 (DLTDDSGVDSVEDDEAELEDVENEEGFDK) show a composition bias toward acidic residues.

It belongs to the RimP family.

The protein localises to the cytoplasm. Required for maturation of 30S ribosomal subunits. The polypeptide is Ribosome maturation factor RimP (Rhodococcus erythropolis (strain PR4 / NBRC 100887)).